A 126-amino-acid chain; its full sequence is Fluoride-specific ion channel FluC (126 aa).

Helical transmembrane passes span 4 to 24, 35 to 55, 68 to 88, and 100 to 120; these read ILAI…IGLW, YGTF…LTLI, MLVT…YESF, and IGYM…GVGL. Na(+) is bound by residues Gly75 and Thr78.

It belongs to the fluoride channel Fluc/FEX (TC 1.A.43) family.

The protein resides in the cell membrane. The enzyme catalyses fluoride(in) = fluoride(out). With respect to regulation, na(+) is not transported, but it plays an essential structural role and its presence is essential for fluoride channel function. Functionally, fluoride-specific ion channel. Important for reducing fluoride concentration in the cell, thus reducing its toxicity. This Chloroflexus aurantiacus (strain ATCC 29366 / DSM 635 / J-10-fl) protein is Fluoride-specific ion channel FluC.